The chain runs to 632 residues: DNA gyrase subunit B (632 aa).

The Toprim domain occupies 419–533 (RELFIVEGES…SGYLYIAQPP (115 aa)). Mg(2+) is bound by residues E425, D498, and D500.

Belongs to the type II topoisomerase GyrB family. In terms of assembly, heterotetramer, composed of two GyrA and two GyrB chains. In the heterotetramer, GyrA contains the active site tyrosine that forms a transient covalent intermediate with DNA, while GyrB binds cofactors and catalyzes ATP hydrolysis. Requires Mg(2+) as cofactor. The cofactor is Mn(2+). Ca(2+) serves as cofactor.

It localises to the cytoplasm. The enzyme catalyses ATP-dependent breakage, passage and rejoining of double-stranded DNA.. A type II topoisomerase that negatively supercoils closed circular double-stranded (ds) DNA in an ATP-dependent manner to modulate DNA topology and maintain chromosomes in an underwound state. Negative supercoiling favors strand separation, and DNA replication, transcription, recombination and repair, all of which involve strand separation. Also able to catalyze the interconversion of other topological isomers of dsDNA rings, including catenanes and knotted rings. Type II topoisomerases break and join 2 DNA strands simultaneously in an ATP-dependent manner. This Archaeoglobus fulgidus (strain ATCC 49558 / DSM 4304 / JCM 9628 / NBRC 100126 / VC-16) protein is DNA gyrase subunit B.